The following is a 407-amino-acid chain: Phosphopentomutase (407 aa).

Positions 10, 306, 311, 347, 348, and 359 each coordinate Mn(2+).

Belongs to the phosphopentomutase family. The cofactor is Mn(2+).

It is found in the cytoplasm. The enzyme catalyses 2-deoxy-alpha-D-ribose 1-phosphate = 2-deoxy-D-ribose 5-phosphate. It carries out the reaction alpha-D-ribose 1-phosphate = D-ribose 5-phosphate. The protein operates within carbohydrate degradation; 2-deoxy-D-ribose 1-phosphate degradation; D-glyceraldehyde 3-phosphate and acetaldehyde from 2-deoxy-alpha-D-ribose 1-phosphate: step 1/2. In terms of biological role, isomerase that catalyzes the conversion of deoxy-ribose 1-phosphate (dRib-1-P) and ribose 1-phosphate (Rib-1-P) to deoxy-ribose 5-phosphate (dRib-5-P) and ribose 5-phosphate (Rib-5-P), respectively. This chain is Phosphopentomutase, found in Pectobacterium atrosepticum (strain SCRI 1043 / ATCC BAA-672) (Erwinia carotovora subsp. atroseptica).